The chain runs to 169 residues: Orotate phosphoribosyltransferase (169 aa).

Residues R86, K90, H92, and 111 to 119 (EDVTTSGGS) each bind 5-phospho-alpha-D-ribose 1-diphosphate. Residues T115 and R143 each contribute to the orotate site.

Belongs to the purine/pyrimidine phosphoribosyltransferase family. PyrE subfamily. Homodimer. The cofactor is Mg(2+).

It carries out the reaction orotidine 5'-phosphate + diphosphate = orotate + 5-phospho-alpha-D-ribose 1-diphosphate. Its pathway is pyrimidine metabolism; UMP biosynthesis via de novo pathway; UMP from orotate: step 1/2. Catalyzes the transfer of a ribosyl phosphate group from 5-phosphoribose 1-diphosphate to orotate, leading to the formation of orotidine monophosphate (OMP). The chain is Orotate phosphoribosyltransferase from Methanocorpusculum labreanum (strain ATCC 43576 / DSM 4855 / Z).